The sequence spans 126 residues: Holo-[acyl-carrier-protein] synthase (126 aa).

The Mg(2+) site is built by D9 and E58.

The protein belongs to the P-Pant transferase superfamily. AcpS family. The cofactor is Mg(2+).

It localises to the cytoplasm. It carries out the reaction apo-[ACP] + CoA = holo-[ACP] + adenosine 3',5'-bisphosphate + H(+). In terms of biological role, transfers the 4'-phosphopantetheine moiety from coenzyme A to a Ser of acyl-carrier-protein. In Vibrio vulnificus (strain YJ016), this protein is Holo-[acyl-carrier-protein] synthase.